Reading from the N-terminus, the 86-residue chain is DNA-directed RNA polymerase subunit Rpo11 (86 aa).

The protein belongs to the archaeal Rpo11/eukaryotic RPB11/RPC19 RNA polymerase subunit family. In terms of assembly, part of the RNA polymerase complex.

The protein localises to the cytoplasm. It catalyses the reaction RNA(n) + a ribonucleoside 5'-triphosphate = RNA(n+1) + diphosphate. Functionally, DNA-dependent RNA polymerase (RNAP) catalyzes the transcription of DNA into RNA using the four ribonucleoside triphosphates as substrates. The chain is DNA-directed RNA polymerase subunit Rpo11 from Archaeoglobus fulgidus (strain ATCC 49558 / DSM 4304 / JCM 9628 / NBRC 100126 / VC-16).